The chain runs to 186 residues: MKKNTGFDSGIEKLARKTASKTGRRSFIGKLGGFLVGSALLPLLPVDRRGRMNEAHAETKGVLGREGYKPQDKDPKSCDYWRHCSIDGNLCDCCGGSLTSCPPGTELSPSSWVASCFNPGDGQTYLIAYRDCCGKQTCGRCNCVNVQGELPVYRPEFNNDIVWCFGADNDAMTYHCTVSPIVGKAS.

Positions 1 to 57 form a signal peptide, tat-type signal; sequence MKKNTGFDSGIEKLARKTASKTGRRSFIGKLGGFLVGSALLPLLPVDRRGRMNEAHA. Intrachain disulfides connect C78/C143, C84/C116, C91/C176, C93/C141, C101/C132, and C133/C164. Tryptophylquinone is present on W112. The tryptophan tryptophylquinone (Trp-Trp) cross-link spans 112–163; that stretch reads WVASCFNPGDGQTYLIAYRDCCGKQTCGRCNCVNVQGELPVYRPEFNNDIVW.

It belongs to the aromatic amine dehydrogenase light chain family. Heterotetramer of two light and two heavy chains. It depends on tryptophan tryptophylquinone residue as a cofactor. Predicted to be exported by the Tat system. The position of the signal peptide cleavage has not been experimentally proven. In terms of processing, tryptophan tryptophylquinone (TTQ) is formed by oxidation of the indole ring of a tryptophan to form tryptophylquinone followed by covalent cross-linking with another tryptophan residue.

It localises to the periplasm. The catalysed reaction is 2 oxidized [amicyanin] + methylamine + H2O = 2 reduced [amicyanin] + formaldehyde + NH4(+) + 2 H(+). The protein operates within one-carbon metabolism; methylamine degradation; formaldehyde from methylamine: step 1/1. Its function is as follows. Methylamine dehydrogenase carries out the oxidation of methylamine. Electrons are passed from methylamine dehydrogenase to amicyanin. The polypeptide is Methylamine dehydrogenase light chain (mauA) (Methylobacillus flagellatus (strain ATCC 51484 / DSM 6875 / VKM B-1610 / KT)).